A 259-amino-acid chain; its full sequence is MNQVAVVIGGGQTLGAFLCHGLAAEGYRVAVVDIQSDKAANVAQEINAEYGESMAYGFGADATSEQSVLALSRGVDEIFGRVDLLVYSAGIAKAAFISDFQLGDFDRSLQVNLVGYFLCAREFSRLMIRDGIQGRIIQINSKSGKVGSKHNSGYSAAKFGGVGLTQSLALDLAEYGITVHSLMLGNLLKSPMFQSLLPQYATKLGIKPDQVEQYYIDKVPLKRGCDYQDVLNMLLFYASPKASYCTGQSINVTGGQVMF.

Valine 4–aspartate 33 contacts NAD(+). Residue serine 141 participates in substrate binding. Residue tyrosine 154 is the Proton acceptor of the active site.

The protein belongs to the short-chain dehydrogenases/reductases (SDR) family. Homotetramer.

The enzyme catalyses D-sorbitol 6-phosphate + NAD(+) = beta-D-fructose 6-phosphate + NADH + H(+). It participates in carbohydrate metabolism; D-sorbitol degradation; D-fructose 6-phosphate from D-sorbitol 6-phosphate: step 1/1. The sequence is that of Sorbitol-6-phosphate 2-dehydrogenase (srlD) from Escherichia coli (strain K12).